A 350-amino-acid chain; its full sequence is Phenylalanine--tRNA ligase alpha subunit (350 aa).

Residue glutamate 260 coordinates Mg(2+).

Belongs to the class-II aminoacyl-tRNA synthetase family. Phe-tRNA synthetase alpha subunit type 1 subfamily. Tetramer of two alpha and two beta subunits. It depends on Mg(2+) as a cofactor.

The protein localises to the cytoplasm. It carries out the reaction tRNA(Phe) + L-phenylalanine + ATP = L-phenylalanyl-tRNA(Phe) + AMP + diphosphate + H(+). In Mycoplasma capricolum subsp. capricolum (strain California kid / ATCC 27343 / NCTC 10154), this protein is Phenylalanine--tRNA ligase alpha subunit.